A 505-amino-acid chain; its full sequence is MPLVEETSLLEDSSVTFPVVIIGNGPSGICLSYMLSGYRPYLSSEAIHPNTILNSKLEEARHLSIVDQDLEYLSEGLEGRSSNPVAVLFDTLLHPDADFGYDYPSVLHWKLEQHHYIPHVVLGKGPPGGAWHNMEGSMLTISFGSWMELPGLKFKDWVSSKRRSLKGDRVMPEEIARYYKHYVKVMGLQKNFRENTYITSVSRLYRDQDDDDIQDRDISTKHLQIEKSNFIKRNWEIRGYQRIADGSHVPFCLFAENVALATGTLDSPAHLEIEGEDFPFVFHSMPEFGAAINKGKLRGKVDPVLIVGSGLTAADAVLCAYNSNIPVIHVFRRRVTDPSLIFKQLPKKLYPEYHKVYHMMCTQSYSVDSNLLSDYTSFPEHRVLSFKSDMKCVLQSVSGLKKIFKLSAAVVLIGSHPNLSFLKDQGCYLGHKSSQPITCKGNPVEIDTYTYECIKEANLFALGPLVGDNFVRFLKGGALGVTRCLATRQKKKHLFVERGGGDGIA.

The protein belongs to the OKL38 family. NADPH is required as a cofactor. As to expression, ubiquitous. Expressed at higher levels in testis and ovary.

Its subcellular location is the midbody. Its function is as follows. Monooxygenase catalytic activity. May be involved in meiosis or the maturation of germ cells. The sequence is that of Oxidative stress-induced growth inhibitor 2 from Homo sapiens (Human).